We begin with the raw amino-acid sequence, 264 residues long: Type 1 encapsulin shell protein (264 aa).

The protein belongs to the encapsulin family. Family 1 subfamily. As to quaternary structure, forms hollow shells composed of 60 subunits. Monomers probably form pentamers which assemble into the shell. There are 12 pores where the pentamers meet as well as 3-fold axis channels and dimer channels; none are larger than 3-4 Angstroms in diameter. The N-terminus of the protein is inside the shell, the C-terminus is outside.

The protein localises to the encapsulin nanocompartment. Shell component of a type 1 encapsulin nanocompartment. Assembles into proteinaceous shells 21-24 nm in diameter. Empty organelles can be expressed in E.coli. Cargo proteins (DypB) are targeted to the interior via their C-terminal extensions. The polypeptide is Type 1 encapsulin shell protein (Rhodococcus erythropolis (strain PR4 / NBRC 100887)).